Reading from the N-terminus, the 232-residue chain is 2,3,4,5-tetrahydropyridine-2,6-dicarboxylate N-acetyltransferase (232 aa).

The protein belongs to the transferase hexapeptide repeat family. DapH subfamily.

The enzyme catalyses (S)-2,3,4,5-tetrahydrodipicolinate + acetyl-CoA + H2O = L-2-acetamido-6-oxoheptanedioate + CoA. It functions in the pathway amino-acid biosynthesis; L-lysine biosynthesis via DAP pathway; LL-2,6-diaminopimelate from (S)-tetrahydrodipicolinate (acetylase route): step 1/3. Functionally, catalyzes the transfer of an acetyl group from acetyl-CoA to tetrahydrodipicolinate. The sequence is that of 2,3,4,5-tetrahydropyridine-2,6-dicarboxylate N-acetyltransferase from Streptococcus pneumoniae serotype 2 (strain D39 / NCTC 7466).